We begin with the raw amino-acid sequence, 317 residues long: Cytochrome c biogenesis protein CcsA (317 aa).

Helical transmembrane passes span 17–37, 44–64, 71–91, 101–121, 143–163, 223–243, 252–272, and 284–304; these read VVSIVITIHLINLLVNEIVGL, GMIVTLFCITGFLIIRWIYSG, LYESLIFLSWNFSIINMLPYL, ITSPSTLFIQGFATSGLLTQI, MILSYASLLCGSLLSIALLVI, IISIGFLFLTIGILSGAVWAN, WDPKETWAFITWTIFAIYLHI, and AIVASIGFLIIWICYFGINIL.

Belongs to the CcmF/CycK/Ccl1/NrfE/CcsA family. As to quaternary structure, may interact with Ccs1.

The protein localises to the plastid. It is found in the chloroplast thylakoid membrane. Required during biogenesis of c-type cytochromes (cytochrome c6 and cytochrome f) at the step of heme attachment. The chain is Cytochrome c biogenesis protein CcsA from Pelargonium hortorum (Common geranium).